The primary structure comprises 25 residues: Caerin-2.3 (25 aa).

In terms of tissue distribution, expressed by the skin parotoid and/or rostral glands.

The protein resides in the secreted. In terms of biological role, acts as a male sex pheromone that attracts females. Has no antimicrobial activity. In Ranoidea caerulea (Green tree frog), this protein is Caerin-2.3.